We begin with the raw amino-acid sequence, 326 residues long: Phenylalanine--tRNA ligase alpha subunit (326 aa).

E251 is a binding site for Mg(2+).

The protein belongs to the class-II aminoacyl-tRNA synthetase family. Phe-tRNA synthetase alpha subunit type 1 subfamily. In terms of assembly, tetramer of two alpha and two beta subunits. Requires Mg(2+) as cofactor.

The protein resides in the cytoplasm. The enzyme catalyses tRNA(Phe) + L-phenylalanine + ATP = L-phenylalanyl-tRNA(Phe) + AMP + diphosphate + H(+). This chain is Phenylalanine--tRNA ligase alpha subunit, found in Alteromonas mediterranea (strain DSM 17117 / CIP 110805 / LMG 28347 / Deep ecotype).